We begin with the raw amino-acid sequence, 311 residues long: Aspartate carbamoyltransferase catalytic subunit (311 aa).

Carbamoyl phosphate-binding residues include arginine 59 and threonine 60. Lysine 87 contacts L-aspartate. The carbamoyl phosphate site is built by arginine 109, histidine 139, and glutamine 142. L-aspartate is bound by residues arginine 172 and arginine 224. Residues alanine 265 and proline 266 each contribute to the carbamoyl phosphate site.

It belongs to the aspartate/ornithine carbamoyltransferase superfamily. ATCase family. As to quaternary structure, heterododecamer (2C3:3R2) of six catalytic PyrB chains organized as two trimers (C3), and six regulatory PyrI chains organized as three dimers (R2).

It catalyses the reaction carbamoyl phosphate + L-aspartate = N-carbamoyl-L-aspartate + phosphate + H(+). It functions in the pathway pyrimidine metabolism; UMP biosynthesis via de novo pathway; (S)-dihydroorotate from bicarbonate: step 2/3. In terms of biological role, catalyzes the condensation of carbamoyl phosphate and aspartate to form carbamoyl aspartate and inorganic phosphate, the committed step in the de novo pyrimidine nucleotide biosynthesis pathway. The polypeptide is Aspartate carbamoyltransferase catalytic subunit (Streptococcus pyogenes serotype M18 (strain MGAS8232)).